Reading from the N-terminus, the 173-residue chain is ATP synthase subunit b (173 aa).

A helical transmembrane segment spans residues 20-40 (IIATLAIFLVLMFLLKKVAWG).

This sequence belongs to the ATPase B chain family. As to quaternary structure, F-type ATPases have 2 components, F(1) - the catalytic core - and F(0) - the membrane proton channel. F(1) has five subunits: alpha(3), beta(3), gamma(1), delta(1), epsilon(1). F(0) has three main subunits: a(1), b(2) and c(10-14). The alpha and beta chains form an alternating ring which encloses part of the gamma chain. F(1) is attached to F(0) by a central stalk formed by the gamma and epsilon chains, while a peripheral stalk is formed by the delta and b chains.

It is found in the cell membrane. Functionally, f(1)F(0) ATP synthase produces ATP from ADP in the presence of a proton or sodium gradient. F-type ATPases consist of two structural domains, F(1) containing the extramembraneous catalytic core and F(0) containing the membrane proton channel, linked together by a central stalk and a peripheral stalk. During catalysis, ATP synthesis in the catalytic domain of F(1) is coupled via a rotary mechanism of the central stalk subunits to proton translocation. Its function is as follows. Component of the F(0) channel, it forms part of the peripheral stalk, linking F(1) to F(0). This is ATP synthase subunit b from Lysinibacillus sphaericus (strain C3-41).